A 159-amino-acid polypeptide reads, in one-letter code: Regulator of G-protein signaling 13 (159 aa).

The RGS domain maps to 34–150; sequence SFENLMATKY…LKSEMYQKLL (117 aa).

Its function is as follows. Inhibits signal transduction by increasing the GTPase activity of G protein alpha subunits thereby driving them into their inactive GDP-bound form. Binds to both G(i)-alpha and G(q)-alpha. This chain is Regulator of G-protein signaling 13 (RGS13), found in Homo sapiens (Human).